Here is a 297-residue protein sequence, read N- to C-terminus: Small ribosomal subunit biogenesis GTPase RsgA (297 aa).

The CP-type G domain maps to 65-223 (INEIGRPAVA…IADTPGFSAI (159 aa)). GTP is bound by residues 114-117 (SKSD) and 166-174 (GQSGAGKST). Residues cysteine 247, cysteine 252, histidine 254, and cysteine 260 each coordinate Zn(2+).

It belongs to the TRAFAC class YlqF/YawG GTPase family. RsgA subfamily. As to quaternary structure, monomer. Associates with 30S ribosomal subunit, binds 16S rRNA. The cofactor is Zn(2+).

The protein localises to the cytoplasm. Functionally, one of several proteins that assist in the late maturation steps of the functional core of the 30S ribosomal subunit. Helps release RbfA from mature subunits. May play a role in the assembly of ribosomal proteins into the subunit. Circularly permuted GTPase that catalyzes slow GTP hydrolysis, GTPase activity is stimulated by the 30S ribosomal subunit. The protein is Small ribosomal subunit biogenesis GTPase RsgA of Lactobacillus johnsonii (strain CNCM I-12250 / La1 / NCC 533).